Reading from the N-terminus, the 606-residue chain is DNA mismatch repair protein MutL (606 aa).

The tract at residues 348-378 (QPHAQRPQAPWSAETSPFRPYPPAAGFSERP) is disordered.

This sequence belongs to the DNA mismatch repair MutL/HexB family.

In terms of biological role, this protein is involved in the repair of mismatches in DNA. It is required for dam-dependent methyl-directed DNA mismatch repair. May act as a 'molecular matchmaker', a protein that promotes the formation of a stable complex between two or more DNA-binding proteins in an ATP-dependent manner without itself being part of a final effector complex. The chain is DNA mismatch repair protein MutL from Rhizobium etli (strain CIAT 652).